A 485-amino-acid chain; its full sequence is UDP-N-acetylmuramoyl-L-alanyl-D-glutamate--2,6-diaminopimelate ligase (485 aa).

Positions 27 and 29 each coordinate UDP-N-acetyl-alpha-D-muramoyl-L-alanyl-D-glutamate. Gly106–Ser112 contributes to the ATP binding site. Residues Thr148–Thr149, Ser175, Gln181, and Arg183 contribute to the UDP-N-acetyl-alpha-D-muramoyl-L-alanyl-D-glutamate site. Lys215 is subject to N6-carboxylysine. Meso-2,6-diaminopimelate is bound by residues Arg382, Asp406–Arg409, Gly454, and Glu458. Positions Asp406 to Arg409 match the Meso-diaminopimelate recognition motif motif.

It belongs to the MurCDEF family. MurE subfamily. Requires Mg(2+) as cofactor. In terms of processing, carboxylation is probably crucial for Mg(2+) binding and, consequently, for the gamma-phosphate positioning of ATP.

It localises to the cytoplasm. It carries out the reaction UDP-N-acetyl-alpha-D-muramoyl-L-alanyl-D-glutamate + meso-2,6-diaminopimelate + ATP = UDP-N-acetyl-alpha-D-muramoyl-L-alanyl-gamma-D-glutamyl-meso-2,6-diaminopimelate + ADP + phosphate + H(+). It functions in the pathway cell wall biogenesis; peptidoglycan biosynthesis. Catalyzes the addition of meso-diaminopimelic acid to the nucleotide precursor UDP-N-acetylmuramoyl-L-alanyl-D-glutamate (UMAG) in the biosynthesis of bacterial cell-wall peptidoglycan. This Bradyrhizobium diazoefficiens (strain JCM 10833 / BCRC 13528 / IAM 13628 / NBRC 14792 / USDA 110) protein is UDP-N-acetylmuramoyl-L-alanyl-D-glutamate--2,6-diaminopimelate ligase.